The sequence spans 520 residues: MDFANLAAQLNAGTILPEGIVIVTLMGVLIVDLILGRTSSRWIGYLAIAGLLAAIVALYFQWDATNPISFTGGFIGDDLSIIFRGIIALSAVVTILMSIRYVEQSGTALAEFIAILLTATLGGMFVSGASELVMIFISLETLSISSYLLTGYTKRDPRSNEAALKYLLIGASSTAVFLYGVSLLYGLSGGQTELSAIANGIITANVGQSLGAVIALVFVIAGIGFKISAAPFHQWTPDVYEGAPTPVIAFLSVGSKAAGFALAIRLLTTVFPFVAEEWKFVFTALAVLSMILGNVVALAQTSMKRMLAYSSIAQAGFVMIGLIAGTDAGYASMIFYLLVYLFMNLCGFTCIILFSLRTGTDQIAEYSGLYQKDPLLTLGLSISLLSLGGIPPLAGFFGKIYLFWAGWQAGLYWLVLLGLVTSVVSIYYYIRVVKMMVVKEPQEMSDVVKNYPEIRWNLPGFRPLQVGLVLTLIATSVAGILSNPLFTLANNSVANTAILQTTKVVSTQVSAIPAEKSEGL.

14 helical membrane-spanning segments follow: residues 15–35 (ILPE…DLIL), 42–62 (WIGY…YFQW), 79–99 (LSII…LMSI), 106–126 (GTAL…GMFV), 132–152 (LVMI…LTGY), 167–187 (LLIG…LYGL), 210–230 (LGAV…ISAA), 244–264 (PTPV…ALAI), 280–300 (FVFT…ALAQ), 306–326 (MLAY…IAGT), 334–354 (IFYL…IILF), 378–398 (LGLS…GFFG), 400–420 (IYLF…LGLV), and 466–486 (VGLV…NPLF).

The protein belongs to the complex I subunit 2 family. NDH-1 can be composed of about 15 different subunits; different subcomplexes with different compositions have been identified which probably have different functions.

The protein resides in the cellular thylakoid membrane. It catalyses the reaction a plastoquinone + NADH + (n+1) H(+)(in) = a plastoquinol + NAD(+) + n H(+)(out). The catalysed reaction is a plastoquinone + NADPH + (n+1) H(+)(in) = a plastoquinol + NADP(+) + n H(+)(out). NDH-1 shuttles electrons from an unknown electron donor, via FMN and iron-sulfur (Fe-S) centers, to quinones in the respiratory and/or the photosynthetic chain. The immediate electron acceptor for the enzyme in this species is believed to be plastoquinone. Couples the redox reaction to proton translocation, and thus conserves the redox energy in a proton gradient. Cyanobacterial NDH-1 also plays a role in inorganic carbon-concentration. The chain is NAD(P)H-quinone oxidoreductase subunit 2 from Trichormus variabilis (strain ATCC 29413 / PCC 7937) (Anabaena variabilis).